Here is a 351-residue protein sequence, read N- to C-terminus: Histidine protein kinase SaeS (351 aa).

Transmembrane regions (helical) follow at residues 9–29 (IIIG…IAYI) and 40–60 (TLTL…SIFI). An HAMP domain is found at 61 to 114 (NPLIQKIKQFNIKTKQFANGNYASNDKTFNSPKEIYELNQSFNKMASEITQQMN). One can recognise a Histidine kinase domain in the interval 129–348 (NLAHDLKTPL…TMTVTLHKLD (220 aa)). His-132 bears the Phosphohistidine; by autocatalysis mark.

In terms of processing, autophosphorylated.

It is found in the cell membrane. The catalysed reaction is ATP + protein L-histidine = ADP + protein N-phospho-L-histidine.. Functionally, member of the two-component regulatory system SaeR/SaeS involved in the regulation of staphylococcal virulence factors in a strain-dependent fashion. Probably functions as a membrane-associated protein kinase that upon sensing the appropriate signal, autophosphorylates and in turn activates the cytosolic response regulator SaeR. This is Histidine protein kinase SaeS (saeS) from Staphylococcus aureus (strain USA300).